Consider the following 60-residue polypeptide: Phycobilisome degradation protein NblA homolog 2 (60 aa).

This sequence to Synechococcus PCC 7942 NblA and some, to chloroplast ycf18.

This Synechocystis sp. (strain ATCC 27184 / PCC 6803 / Kazusa) protein is Phycobilisome degradation protein NblA homolog 2.